Here is a 120-residue protein sequence, read N- to C-terminus: NAD(P)H-quinone oxidoreductase subunit 3, chloroplastic (120 aa).

3 helical membrane-spanning segments follow: residues 9 to 29 (IFWA…LISG), 64 to 84 (MFAL…PWAM), and 88 to 108 (VLGV…IVGS).

It belongs to the complex I subunit 3 family. In terms of assembly, NDH is composed of at least 16 different subunits, 5 of which are encoded in the nucleus.

The protein localises to the plastid. Its subcellular location is the chloroplast thylakoid membrane. The catalysed reaction is a plastoquinone + NADH + (n+1) H(+)(in) = a plastoquinol + NAD(+) + n H(+)(out). It carries out the reaction a plastoquinone + NADPH + (n+1) H(+)(in) = a plastoquinol + NADP(+) + n H(+)(out). NDH shuttles electrons from NAD(P)H:plastoquinone, via FMN and iron-sulfur (Fe-S) centers, to quinones in the photosynthetic chain and possibly in a chloroplast respiratory chain. The immediate electron acceptor for the enzyme in this species is believed to be plastoquinone. Couples the redox reaction to proton translocation, and thus conserves the redox energy in a proton gradient. The protein is NAD(P)H-quinone oxidoreductase subunit 3, chloroplastic of Acorus calamus var. americanus (American sweet flag).